We begin with the raw amino-acid sequence, 246 residues long: Uridylate kinase (246 aa).

20–23 (KISG) serves as a coordination point for ATP. The tract at residues 28–33 (GDQGYG) is involved in allosteric activation by GTP. UMP is bound at residue Gly-62. Positions 63 and 67 each coordinate ATP. UMP is bound by residues Asp-82 and 143 to 150 (TGNPYFTT). Thr-170, Tyr-176, and Asp-179 together coordinate ATP.

Belongs to the UMP kinase family. Homohexamer.

The protein localises to the cytoplasm. It carries out the reaction UMP + ATP = UDP + ADP. Its pathway is pyrimidine metabolism; CTP biosynthesis via de novo pathway; UDP from UMP (UMPK route): step 1/1. With respect to regulation, allosterically activated by GTP. Inhibited by UTP. Catalyzes the reversible phosphorylation of UMP to UDP. The polypeptide is Uridylate kinase (Cereibacter sphaeroides (strain ATCC 17025 / ATH 2.4.3) (Rhodobacter sphaeroides)).